The chain runs to 372 residues: Cyclin-dependent kinase 9 (372 aa).

The Protein kinase domain occupies 19 to 315 (YEKLAKIGQG…SDDALNHDFF (297 aa)). Residue 25–33 (IGQGTFGEV) coordinates ATP. Phosphoserine is present on lysine 35. Position 44 is an N6-acetyllysine; by EP300/CBP, PCAF/KAT2B and GCN5/KAT2A (lysine 44). Residue lysine 48 coordinates ATP. Residue lysine 48 is modified to N6-acetyllysine; by PCAF/KAT2B and GCN5/KAT2A. A Phosphothreonine modification is found at asparagine 54. Residue 104-106 (DFC) participates in ATP binding. Catalysis depends on aspartate 149, which acts as the Proton acceptor. A T-loop region spans residues 166 to 191 (ADFGLARAFSLAKNSQPNRYTNRVVT). Aspartate 167 is a binding site for ATP. Serine 175 carries the phosphoserine modification. Phosphothreonine; by CaMK1D is present on threonine 186. The tract at residues 343-372 (RRKGSQITQQSTNQSRNPATTNQTEFERVF) is disordered. Serine 347 bears the Phosphoserine; by CDK9 and PKA mark. The segment covering 347–366 (SQITQQSTNQSRNPATTNQT) has biased composition (polar residues). Threonine 350 is subject to Phosphothreonine; by CDK9. Position 353 is a phosphoserine; by CDK9 (serine 353). Threonine 354 carries the phosphothreonine; by CDK9 modification. A Phosphoserine; by CDK9 modification is found at serine 357. Residues threonine 362 and threonine 363 each carry the phosphothreonine; by CDK9 modification.

It belongs to the protein kinase superfamily. CMGC Ser/Thr protein kinase family. CDC2/CDKX subfamily. As to quaternary structure, component of the super elongation complex (SEC), at least composed of EAF1, EAF2, CDK9, MLLT3/AF9, AFF (AFF1 or AFF4), the P-TEFb complex and ELL (ELL, ELL2 or ELL3). Associates with CCNT1/cyclin-T1, CCNT2/cyclin-T2 (isoform A and isoform B) or CCNK/cyclin-K to form active P-TEFb. P-TEFb forms a complex with AFF4/AF5Q31 and is part of the super elongation complex (SEC). Component of a complex which is composed of at least 5 members: HTATSF1/Tat-SF1, P-TEFb complex, RNA pol II, SUPT5H and NCL/nucleolin. Associates with UBR5 and forms a transcription regulatory complex composed of CDK9, RNAP II, UBR5 and TFIIS/TCEA1 that can stimulate target gene transcription (e.g. gamma fibrinogen/FGG) by recruiting their promoters. Component of the 7SK snRNP inactive complex which is composed of at least 8 members: P-TEFb (composed of CDK9 and CCNT1/cyclin-T1), HEXIM1, HEXIM2, LARP7, BCDIN3, SART3 proteins and 7SK and U6 snRNAs. This inactive 7SK snRNP complex can also interact with NCOR1 and HDAC3, probably to regulate CDK9 acetylation. Release of P-TEFb from P-TEFb/7SK snRNP complex requires both PP2B to transduce calcium Ca(2+) signaling in response to stimuli (e.g. UV or hexamethylene bisacetamide (HMBA)) and PPP1CA to dephosphorylate Thr-186. This released P-TEFb remains inactive in the pre-initiation complex with BRD4 until new Thr-186 phosphorylation occurs after the synthesis of a short RNA. Interacts with BRD4; to target chromatin binding. Interacts with JMJD6. Interacts with activated nuclear STAT3 and RELA/p65. Binds to AR and MYOD1. Forms a complex composed of CDK9, CCNT1/cyclin-T1, EP300 and GATA4 that stimulates hypertrophy in cardiomyocytes. The large PER complex involved in the repression of transcriptional termination is composed of at least PER2, CDK9, DDX5, DHX9, NCBP1 and POLR2A. Interacts with HSF1. Interacts with TBX21. Isoform 3: binds to KU70/XRCC6. Interacts with WDR43. Interacts with ZMYND8; the association appears to occur between homodimeric ZMYND8 and the activated form of the P-TEFb complex. In terms of assembly, (Microbial infection) Interacts with the acidic/proline-rich region of HIV-1 and HIV-2 Tat via T-loop region and is thus required for HIV to hijack host transcription machinery during its replication through cooperative binding to viral TAR RNA. (Microbial infection) Interacts with human herpes virus 1 (HHV-1) protein ICP22; this interaction blocks the recruitment of positive transcription elongation factor b (P-TEFb) to the viral promoter. Autophosphorylation at Thr-186, Ser-347, Thr-350, Ser-353, Thr-354 and Ser-357 triggers kinase activity by promoting cyclin and substrate binding (e.g. HIV TAT) upon conformational changes. Thr-186 phosphorylation requires the calcium Ca(2+) signaling pathway, including CaMK1D and calmodulin. This inhibition is relieved by Thr-29 dephosphorylation. However, phosphorylation at Thr-29 is inhibitory within the HIV transcription initiation complex. Phosphorylation at Ser-175 inhibits kinase activity. Can be phosphorylated on either Thr-362 or Thr-363 but not on both simultaneously. Post-translationally, dephosphorylation of Thr-186 by PPM1A and PPM1B blocks CDK9 activity and may lead to CDK9 proteasomal degradation. However, PPP1CA-mediated Thr-186 dephosphorylation is required to release P-TEFb from its inactive P-TEFb/7SK snRNP complex. Dephosphorylated at Ser-347 by the PNUTS-PP1 complex during RNA polymerase II transcription pause-release. Dephosphorylation of C-terminus Thr and Ser residues by protein phosphatase-1 (PP1) triggers CDK9 activity, contributing to the activation of HIV-1 transcription. In terms of processing, N6-acetylation of Lys-44 promotes kinase activity, whereas acetylation of both Lys-44 and Lys-48 mediated by PCAF/KAT2B and GCN5/KAT2A reduces kinase activity. The acetylated form associates with PML bodies in the nuclear matrix and with the transcriptionally silent HIV-1 genome; deacetylated upon transcription stimulation. Deacetylated by SIRT7, promoting the kinase activity and subsequent 'Ser-2' phosphorylation of the C-terminal domain (CTD) of RNA polymerase II. Polyubiquitinated and thus activated by UBR5. This ubiquitination is promoted by TFIIS/TCEA1 and favors 'Ser-2' phosphorylation of RPB1/POLR2A CTD. As to expression, ubiquitous.

It localises to the nucleus. Its subcellular location is the cytoplasm. The protein localises to the PML body. The catalysed reaction is L-seryl-[protein] + ATP = O-phospho-L-seryl-[protein] + ADP + H(+). It carries out the reaction L-threonyl-[protein] + ATP = O-phospho-L-threonyl-[protein] + ADP + H(+). The enzyme catalyses [DNA-directed RNA polymerase] + ATP = phospho-[DNA-directed RNA polymerase] + ADP + H(+). Its activity is regulated as follows. Inhibited by CDKI-71, CR8, GPC-286199, AG-024322, flavopiridol (alvocidib), RBG-286147, anilinopyrimidine 32, arylazopyrazole 31b, indirubin 3'-monoxime, meriolin 3,P276-00, olomoucine II, pyrazolotriazine, meriolin, variolin, thiazolyl-pyrimidine, thiazolyl-pyrimidine, indirubin-30-monoxime, ZK 304709, AG-012986, AT7519, R547, RGB-286638, imidazole pyrimidine, EXEL-3700, EXEL-8647, 5,6-dichloro-1-b-ribofur-anosyl-benzimidazole (DRB), P276-00, roscovitine (seliciclib, CYC202) and SNS-032 (BMS-387032). Activation by Thr-186 phosphorylation is calcium Ca(2+) signaling pathway-dependent; actively inactivated by dephosphorylation mediated by PPP1CA, PPM1A and PPM1B. Reversibly repressed by acetylation at Lys-44 and Lys-48. Protein kinase involved in the regulation of transcription. Member of the cyclin-dependent kinase pair (CDK9/cyclin-T) complex, also called positive transcription elongation factor b (P-TEFb), which facilitates the transition from abortive to productive elongation by phosphorylating the CTD (C-terminal domain) of the large subunit of RNA polymerase II (RNAP II) POLR2A, SUPT5H and RDBP. This complex is inactive when in the 7SK snRNP complex form. Phosphorylates EP300, MYOD1, RPB1/POLR2A and AR and the negative elongation factors DSIF and NELFE. Regulates cytokine inducible transcription networks by facilitating promoter recognition of target transcription factors (e.g. TNF-inducible RELA/p65 activation and IL-6-inducible STAT3 signaling). Promotes RNA synthesis in genetic programs for cell growth, differentiation and viral pathogenesis. P-TEFb is also involved in cotranscriptional histone modification, mRNA processing and mRNA export. Modulates a complex network of chromatin modifications including histone H2B monoubiquitination (H2Bub1), H3 lysine 4 trimethylation (H3K4me3) and H3K36me3; integrates phosphorylation during transcription with chromatin modifications to control co-transcriptional histone mRNA processing. The CDK9/cyclin-K complex has also a kinase activity towards CTD of RNAP II and can substitute for CDK9/cyclin-T P-TEFb in vitro. Replication stress response protein; the CDK9/cyclin-K complex is required for genome integrity maintenance, by promoting cell cycle recovery from replication arrest and limiting single-stranded DNA amount in response to replication stress, thus reducing the breakdown of stalled replication forks and avoiding DNA damage. In addition, probable function in DNA repair of isoform 2 via interaction with KU70/XRCC6. Promotes cardiac myocyte enlargement. RPB1/POLR2A phosphorylation on 'Ser-2' in CTD activates transcription. AR phosphorylation modulates AR transcription factor promoter selectivity and cell growth. DSIF and NELF phosphorylation promotes transcription by inhibiting their negative effect. The phosphorylation of MYOD1 enhances its transcriptional activity and thus promotes muscle differentiation. Catalyzes phosphorylation of KAT5, promoting KAT5 recruitment to chromatin and histone acetyltransferase activity. This Homo sapiens (Human) protein is Cyclin-dependent kinase 9.